Consider the following 703-residue polypeptide: ABC transporter G family member 11 (703 aa).

Residues 50–293 (LTWQDLTVMV…FAQAGFPCPA (244 aa)) form the ABC transporter domain. 87–94 (GPSGSGKS) lines the ATP pocket. In terms of domain architecture, ABC transmembrane type-2 spans 382–594 (LQTYTLTKRS…ALQGQYQNDL (213 aa)). Asn394 carries an N-linked (GlcNAc...) asparagine glycan. The next 6 helical transmembrane spans lie at 406–426 (LLIY…VGTS), 436–456 (CASF…PSFV), 485–505 (TPFL…MVGL), 513–533 (LFFV…MMAI), 540–560 (FLMG…VSGF), and 628–648 (INLS…FIMI). N-linked (GlcNAc...) asparagine glycans are attached at residues Asn671 and Asn675. At Ser688 the chain carries Phosphoserine.

Belongs to the ABC transporter superfamily. ABCG family. Eye pigment precursor importer (TC 3.A.1.204) subfamily. As to quaternary structure, homodimer. Forms heterodimers with ABCG9, ABCG12 and ABCG14 in epidermal cells. As to expression, expressed in seedlings, roots, stems, leaves, flowers, and siliques, mostly in epidermis, trichomes, vasculatures and developing tissues. Follows an uniparental maternal expression in the seed, thus being the product of a maternally expressed imprinted gene. Accumulates in the phloem. Transcripts seem to be transported from shoots to roots.

Its subcellular location is the cell membrane. In terms of biological role, required for the cuticle, root suberin and pollen coat development by controlling cutin and maybe wax transport to the extracellular matrix. Involved in developmental plasticity and stress responses. Together with ABCG9 and ABCG14, required for vascular development by regulating lipid/sterol homeostasis. May be a transporter of lignin precursors during tracheary element differentiation. The protein is ABC transporter G family member 11 of Arabidopsis thaliana (Mouse-ear cress).